The chain runs to 525 residues: GMP synthase [glutamine-hydrolyzing] (525 aa).

Residues 9-207 (RILILDFGSQ…VRDICQCEAL (199 aa)) form the Glutamine amidotransferase type-1 domain. Cysteine 86 (nucleophile) is an active-site residue. Catalysis depends on residues histidine 181 and glutamate 183. Positions 208–400 (WTPAKIIDDA…LGLPYDMLYR (193 aa)) constitute a GMPS ATP-PPase domain. Residue 235–241 (SGGVDSS) coordinates ATP.

In terms of assembly, homodimer.

It carries out the reaction XMP + L-glutamine + ATP + H2O = GMP + L-glutamate + AMP + diphosphate + 2 H(+). It participates in purine metabolism; GMP biosynthesis; GMP from XMP (L-Gln route): step 1/1. Catalyzes the synthesis of GMP from XMP. The protein is GMP synthase [glutamine-hydrolyzing] of Escherichia coli O127:H6 (strain E2348/69 / EPEC).